A 474-amino-acid chain; its full sequence is Protein anachronism (474 aa).

The N-terminal stretch at 1–33 (MASAMRGEKCERSRIRELVLILSLITMAGDSRA) is a signal peptide. Residues N54, N62, N73, N116, and N144 are each glycosylated (N-linked (GlcNAc...) asparagine). The interval 173-195 (NPGQTREHNPGQASTQPISTENP) is disordered. Polar residues predominate over residues 183–195 (GQASTQPISTENP). Residue N342 is glycosylated (N-linked (GlcNAc...) asparagine). The span at 359–372 (FIESTTSNSPTIDN) shows a compositional bias: polar residues. The disordered stretch occupies residues 359-474 (FIESTTSNSP…HHRIPAHKQE (116 aa)). 2 stretches are compositionally biased toward basic residues: residues 390 to 400 (LVHHRRHHHNH) and 437 to 474 (NHHR…HKQE).

In terms of tissue distribution, synthesized in some glial cells and secreted.

It is found in the secreted. Functionally, negatively regulates proliferation of neuronal precursor cells, thereby controlling the timing of postembryonic neurogenesis. The sequence is that of Protein anachronism (ana) from Drosophila melanogaster (Fruit fly).